Consider the following 705-residue polypeptide: Beta-xylosidase (705 aa).

This sequence belongs to the glycosyl hydrolase 52 family.

It carries out the reaction Hydrolysis of (1-&gt;4)-beta-D-xylans, to remove successive D-xylose residues from the non-reducing termini.. Its pathway is glycan degradation; xylan degradation. This is Beta-xylosidase (xylA) from Geobacillus stearothermophilus (Bacillus stearothermophilus).